The following is a 168-amino-acid chain: DAZ-associated protein 2 (168 aa).

The span at 1–13 shows a compositional bias: low complexity; the sequence is MNSKGQYPTQPTY. The segment at 1-25 is disordered; that stretch reads MNSKGQYPTQPTYPVQPPGNPVYPQ. The short motif at 39-42 is the PPAY element; that stretch reads PPAY. S77 carries the post-translational modification Phosphoserine.

Interacts with SOX6. Interacts with DAZ1 and DAZL. Interacts with IL17RB. May interact with FAM168B. Interacts with INCA1. Interacts with EIF4G1 and EIF4G2. Interacts (via PPAY motif) with NEDD4 (via WW domains). Interacts with transcription factor TCF4; the interaction results in localization of DAZAP2 to the nucleus. Interacts with transcription factors TCF7 and TCF7L1. Interacts with transcription factor LEF1. Interacts with serine/threonine-protein kinase HIPK2; the interaction results in phosphorylation of DAZAP2 which causes localization of DAZAP2 to the nucleus, reduces interaction of DAZAP2 with HIPK2 and prevents DAZAP2-dependent degradation of HIPK2. Interacts with ubiquitin ligase SIAH1; the interaction is decreased following phosphorylation of DAZAP2 by HIPK2. Interacts with TP53; the interaction is triggered by DNA damage. In terms of processing, ubiquitinated by SMURF2, leading to proteasomal degradation. Ubiquitinated by NEDD4, leading to proteasomal degradation. Following DNA damage, phosphorylated by HIPK2 which promotes DAZAP2 localization to the nucleus, reduces interaction of DAZAP2 with HIPK2 and SIAH1, and prevents DAZAP2-dependent ubiquitination of HIPK2 by E3 ubiquitin-protein ligase SIAH1 and subsequent HIPK2 proteasomal degradation.

The protein localises to the cytoplasm. The protein resides in the nucleus. Its subcellular location is the nucleus speckle. It is found in the nuclear body. It localises to the stress granule. Its function is as follows. In unstressed cells, promotes SIAH1-mediated polyubiquitination and degradation of the serine/threonine-protein kinase HIPK2, probably by acting as a loading factor that potentiates complex formation between HIPK2 and ubiquitin ligase SIAH1. In response to DNA damage, localizes to the nucleus following phosphorylation by HIPK2 and modulates the expression of a subset of TP53/p53 target genes by binding to TP53 at target gene promoters. This limits the expression of a number of cell death-mediating TP53 target genes, reducing DNA damage-induced cell death. Enhances the binding of transcription factor TCF7L2/TCF4, a Wnt signaling pathway effector, to the promoters of target genes. Plays a role in stress granule formation. The polypeptide is DAZ-associated protein 2 (Rattus norvegicus (Rat)).